The following is a 717-amino-acid chain: SAGA factor-like TAF6 (717 aa).

Residues 123 to 204 form a sufficient for interaction with Taf9 region; sequence KSYAGFDPRS…VPPMLGAMDS (82 aa).

The protein belongs to the TAF6 family. As to quaternary structure, component of the Spt-Ada-Gcn5 acetyltransferase (SAGA) complex consisting of wda/Taf5L, Saf6, Taf9, Taf10b, Taf12, Ada1, Spt3, Spt7, Spt20, Sf3b3, Sf3b5, Nipped-A/Tra1, a histone acetyltransferase (HAT) module made up of Gcn5, Ada2b (Isoform B), Ada3 and Sgf29, and a deubiquitinase (DUB) module made up of not/nonstop, Sgf11 and e(y)2 tethered to SAGA by Atxn7; not essential for SAGA complex assembly, histone-modifying activity or chromosomal recruitment. Interacts (via N-terminal histone-fold domain) with Taf9 (via N-terminal histone-fold domain); the interaction is probably direct. Probably forms a histone-like heterooctamer structure with Taf9, Taf12 and Taf10b.

Its subcellular location is the nucleus. The protein localises to the chromosome. Component of the transcription regulatory complex SAGA, a multiprotein complex that activates transcription by remodeling chromatin and mediating histone acetylation and deubiquitination. The SAGA complex predominantly acetylates histone H3. Involved in SAGA complex coactivator function but not essential for SAGA complex assembly, histone-modifying activity or chromosomal recruitment. Required for oogenesis; involved in transcriptional activation. This chain is SAGA factor-like TAF6, found in Drosophila melanogaster (Fruit fly).